The chain runs to 217 residues: Probable GTP-binding protein EngB (217 aa).

Residues 31-205 form the EngB-type G domain; that stretch reads VGVEIAFAGR…LAILDAWCHP (175 aa). GTP is bound by residues 39–46, 66–70, 84–87, 151–154, and 184–186; these read GRSNAGKS, GRTQL, DLPG, TKAD, and FSA. S46 and T68 together coordinate Mg(2+).

Belongs to the TRAFAC class TrmE-Era-EngA-EngB-Septin-like GTPase superfamily. EngB GTPase family. Mg(2+) is required as a cofactor.

Necessary for normal cell division and for the maintenance of normal septation. The sequence is that of Probable GTP-binding protein EngB from Shewanella amazonensis (strain ATCC BAA-1098 / SB2B).